The sequence spans 279 residues: Phospholipase A and acyltransferase 5 (279 aa).

Disordered stretches follow at residues 1–53 (MGLS…GLNS) and 70–117 (QLPA…ENEG). The segment covering 97-106 (LETTPSQKAD) has biased composition (polar residues). In terms of domain architecture, LRAT spans 135 to 249 (LIEIFRIGYE…LRYGVPRSQQ (115 aa)). Catalysis depends on residues His-145 and His-157. Cys-233 (acyl-thioester intermediate) is an active-site residue.

This sequence belongs to the H-rev107 family. In terms of tissue distribution, highest expression level in testis and pancreas.

The protein resides in the cytoplasm. The protein localises to the cytosol. It carries out the reaction a 1,2-diacyl-sn-glycero-3-phosphocholine + H2O = a 1-acyl-sn-glycero-3-phosphocholine + a fatty acid + H(+). The catalysed reaction is a 1,2-diacyl-sn-glycero-3-phosphocholine + H2O = a 2-acyl-sn-glycero-3-phosphocholine + a fatty acid + H(+). It catalyses the reaction 1-hexadecanoyl-2-(5Z,8Z,11Z,14Z-eicosatetraenoyl)-sn-glycero-3-phosphocholine + 1,2-di-(9Z-octadecenoyl)-sn-glycero-3-phosphoethanolamine = N-(5Z,8Z,11Z,14Z-eicosatetraenoyl)-1,2-di-(9Z-octadecenoyl)-sn-glycero-3-phosphoethanolamine + 1-hexadecanoyl-sn-glycero-3-phosphocholine + H(+). The enzyme catalyses 1,2-di-(9Z-octadecenoyl)-sn-glycero-3-phosphoethanolamine + 1,2-dihexadecanoyl-sn-glycero-3-phosphocholine = N-hexadecanoyl-1,2-di-(9Z-octadecenoyl)-sn-glycero-3-phosphoethanolamine + 1-hexadecanoyl-sn-glycero-3-phosphocholine + H(+). It carries out the reaction 1,2-di-(9Z-octadecenoyl)-sn-glycero-3-phosphoethanolamine + 1,2-dihexadecanoyl-sn-glycero-3-phosphocholine = N-hexadecanoyl-1,2-di-(9Z-octadecenoyl)-sn-glycero-3-phosphoethanolamine + 2-hexadecanoyl-sn-glycero-3-phosphocholine + H(+). The catalysed reaction is a 1,2-diacyl-sn-glycero-3-phosphoethanolamine + a 1,2-diacyl-sn-glycero-3-phosphocholine = an N-acyl-1,2-diacyl-sn-glycero-3-phosphoethanolamine + a 1-acyl-sn-glycero-3-phosphocholine + H(+). It catalyses the reaction a 1,2-diacyl-sn-glycero-3-phosphoethanolamine + a 1,2-diacyl-sn-glycero-3-phosphocholine = an N-acyl-1,2-diacyl-sn-glycero-3-phosphoethanolamine + a 2-acyl-sn-glycero-3-phosphocholine + H(+). The enzyme catalyses 1-hexadecanoyl-2-(9Z-octadecenoyl)-sn-glycero-3-phosphocholine + 1,2-di-(9Z-octadecenoyl)-sn-glycero-3-phosphoethanolamine = N,1,2-tri-(9Z-octadecenoyl)-sn-glycero-3-phosphoethanolamine + 1-hexadecanoyl-sn-glycero-3-phosphocholine + H(+). Exhibits both phospholipase A1/2 and acyltransferase activities. Shows phospholipase A1 (PLA1) and A2 (PLA2) activity, catalyzing the calcium-independent release of fatty acids from the sn-1 or sn-2 position of glycerophospholipids. Shows N-acyltransferase activity, catalyzing the calcium-independent transfer of a fatty acyl group at the sn-1 position of phosphatidylcholine (PC) and other glycerophospholipids to the primary amine of phosphatidylethanolamine (PE), forming N-acylphosphatidylethanolamine (NAPE), which serves as precursor for N-acylethanolamines (NAEs). This is Phospholipase A and acyltransferase 5 from Homo sapiens (Human).